A 74-amino-acid polypeptide reads, in one-letter code: Acyl carrier protein (74 aa).

In terms of domain architecture, Carrier spans 1 to 74 (MFEKVRKIIA…DVVEYIKNNS (74 aa)). Residue Ser-34 is modified to O-(pantetheine 4'-phosphoryl)serine.

The protein belongs to the acyl carrier protein (ACP) family. Post-translationally, 4'-phosphopantetheine is transferred from CoA to a specific serine of apo-ACP by AcpS. This modification is essential for activity because fatty acids are bound in thioester linkage to the sulfhydryl of the prosthetic group.

It is found in the cytoplasm. It participates in lipid metabolism; fatty acid biosynthesis. In terms of biological role, carrier of the growing fatty acid chain in fatty acid biosynthesis. This is Acyl carrier protein from Acetivibrio thermocellus (strain ATCC 27405 / DSM 1237 / JCM 9322 / NBRC 103400 / NCIMB 10682 / NRRL B-4536 / VPI 7372) (Clostridium thermocellum).